A 173-amino-acid polypeptide reads, in one-letter code: Alpha-crystallin A chain (173 aa).

The residue at position 1 (Met1) is an N-acetylmethionine. The segment at 1 to 63 is required for complex formation with BFSP1 and BFSP2; that stretch reads MDIAIQHPWF…RTVLDSGISE (63 aa). Gln6 carries the post-translational modification Deamidated glutamine; partial. An N-linked (Glc) (glycation) lysine glycan is attached at Lys11. Ser45 bears the Phosphoserine mark. Deamidated glutamine; partial is present on Gln50. A sHSP domain is found at 52-162; it reads LFRTVLDSGI…GHSERAIPVS (111 aa). The residue at position 70 (Lys70) is an N6-acetyllysine. Lys78 is a glycosylation site (N-linked (Glc) (glycation) lysine). Gln90 bears the Deamidated glutamine; partial mark. Residue Lys99 is modified to N6-acetyllysine. His100 provides a ligand contact to Zn(2+). Residue Asn101 is modified to Deamidated asparagine; partial. Glu102 and His107 together coordinate Zn(2+). The residue at position 122 (Ser122) is a Phosphoserine. A Deamidated asparagine; partial modification is found at Asn123. The interval 144 to 173 is disordered; the sequence is PKIPSGVDAGHSERAIPVSREEKPSSAPSS. The span at 153–167 shows a compositional bias: basic and acidic residues; that stretch reads GHSERAIPVSREEKP. His154 provides a ligand contact to Zn(2+). Positions 157-163 are important for oligomerization; that stretch reads RAIPVSR. O-linked (GlcNAc) serine glycosylation occurs at Ser162.

It belongs to the small heat shock protein (HSP20) family. As to quaternary structure, heteromer composed of three CRYAA and one CRYAB subunits. Inter-subunit bridging via zinc ions enhances stability, which is crucial as there is no protein turn over in the lens. Can also form homodimers and homotetramers (dimers of dimers) which serve as the building blocks of homooligomers. Within homooligomers, the zinc-binding motif is created from residues of 3 different molecules. His-100 and Glu-102 from one molecule are ligands of the zinc ion, and His-107 and His-154 residues from additional molecules complete the site with tetrahedral coordination geometry. Part of a complex required for lens intermediate filament formation composed of BFSP1, BFSP2 and CRYAA. Acetylation at Lys-70 may increase chaperone activity. In terms of processing, undergoes age-dependent proteolytical cleavage at the C-terminus.

Its subcellular location is the cytoplasm. The protein localises to the nucleus. Functionally, contributes to the transparency and refractive index of the lens. Acts as a chaperone, preventing aggregation of various proteins under a wide range of stress conditions. Required for the correct formation of lens intermediate filaments as part of a complex composed of BFSP1, BFSP2 and CRYAA. The protein is Alpha-crystallin A chain (CRYAA) of Bos taurus (Bovine).